Consider the following 474-residue polypeptide: ATP synthase subunit beta 1 (474 aa).

An ATP-binding site is contributed by 157–164 (GGAGVGKT).

It belongs to the ATPase alpha/beta chains family. In terms of assembly, F-type ATPases have 2 components, CF(1) - the catalytic core - and CF(0) - the membrane proton channel. CF(1) has five subunits: alpha(3), beta(3), gamma(1), delta(1), epsilon(1). CF(0) has three main subunits: a(1), b(2) and c(9-12). The alpha and beta chains form an alternating ring which encloses part of the gamma chain. CF(1) is attached to CF(0) by a central stalk formed by the gamma and epsilon chains, while a peripheral stalk is formed by the delta and b chains.

Its subcellular location is the cell inner membrane. The enzyme catalyses ATP + H2O + 4 H(+)(in) = ADP + phosphate + 5 H(+)(out). In terms of biological role, produces ATP from ADP in the presence of a proton gradient across the membrane. The catalytic sites are hosted primarily by the beta subunits. This Albidiferax ferrireducens (strain ATCC BAA-621 / DSM 15236 / T118) (Rhodoferax ferrireducens) protein is ATP synthase subunit beta 1.